The following is a 341-amino-acid chain: Phosphate acyltransferase (341 aa).

The protein belongs to the PlsX family. As to quaternary structure, homodimer. Probably interacts with PlsY.

It is found in the cytoplasm. It carries out the reaction a fatty acyl-[ACP] + phosphate = an acyl phosphate + holo-[ACP]. The protein operates within lipid metabolism; phospholipid metabolism. Its function is as follows. Catalyzes the reversible formation of acyl-phosphate (acyl-PO(4)) from acyl-[acyl-carrier-protein] (acyl-ACP). This enzyme utilizes acyl-ACP as fatty acyl donor, but not acyl-CoA. The polypeptide is Phosphate acyltransferase (Vibrio campbellii (strain ATCC BAA-1116)).